Here is a 219-residue protein sequence, read N- to C-terminus: Probable oxidoreductase virH (219 aa).

Belongs to the oxidoreductase OpS7 family.

It participates in secondary metabolite biosynthesis. Its function is as follows. Probable oxidoreductase; part of the gene cluster that mediates the biosynthesis of virensols and trichoxide, fungal natural products that contain or are derived from a salicylaldehyde core. The pathway begins with the synthesis of the reduced chain in virensol C by the highly reducing polyketide synthase virA via condensation of one acetate and 8 malonate units. VirA has interesting programming rules since the first 2 ketides are fully reduced, the 3 following ketides undergo beta-dehydration, and the last 3 ketides are only reduced to beta-hydroxys to yield the trihydroxy portion. The production of aldehyde virensol C by virA alone is surprising, since virA does not contain a reductase (R) domain that is typically associated with reductive product release in HRPKS. The cupin-domain enzyme virC is involved in enhancing virA product turnover. The short-chain dehydrogenase virB then oxidizes the C-7 alcohol of virensol C to a ketone, yielding virensol D. Virensol D is further transformed to salicylaldehyde 5-deoxyaurocitrin by the short-chain dehydrogenase virD. VirD catalyzes the dehydrogenation of C-3 to form the beta-ketone aldehyde, which is followed by the generation of the nucleophilic C-2 that is required for the intramolecular aldol condensation between C-2 and C-7, itself followed by dehydration and aromatization which leads to salicylaldehyde 5-deoxyaurocitrin. While the dehydrogenation of virensol D is definitely catalyzed by virD, the aldol condensation and dehydration may be uncatalyzed or assisted by virD. The short chain dehydrogenase virG then converts salicylaldehyde 5-deoxyaurocitrin into virensol B which is further hydroxylated by the cytochrome P450 monooxygenase virE to yield the hydroquinone virensol A. VirI then may oxidize virensol A to form the quinone, while virH performs the epoxidation. Finally, the two remaining short-chain dehydrogenases, virK and virL, are probably responsible for reducing the ketones to the corresponding alcohols to furnish the epoxycyclohexanol structure in trichoxide. The polypeptide is Probable oxidoreductase virH (Hypocrea virens (strain Gv29-8 / FGSC 10586) (Gliocladium virens)).